Consider the following 325-residue polypeptide: Biotin synthase (325 aa).

A Radical SAM core domain is found at 42–270 (YKVQLASLLS…QSRVRLSAGR (229 aa)). Residues Cys-57, Cys-61, and Cys-64 each coordinate [4Fe-4S] cluster. Positions 101, 133, 193, and 265 each coordinate [2Fe-2S] cluster.

This sequence belongs to the radical SAM superfamily. Biotin synthase family. Homodimer. [4Fe-4S] cluster is required as a cofactor. It depends on [2Fe-2S] cluster as a cofactor.

The enzyme catalyses (4R,5S)-dethiobiotin + (sulfur carrier)-SH + 2 reduced [2Fe-2S]-[ferredoxin] + 2 S-adenosyl-L-methionine = (sulfur carrier)-H + biotin + 2 5'-deoxyadenosine + 2 L-methionine + 2 oxidized [2Fe-2S]-[ferredoxin]. Its pathway is cofactor biosynthesis; biotin biosynthesis; biotin from 7,8-diaminononanoate: step 2/2. Functionally, catalyzes the conversion of dethiobiotin (DTB) to biotin by the insertion of a sulfur atom into dethiobiotin via a radical-based mechanism. This Synechococcus sp. (strain WH7803) protein is Biotin synthase.